Consider the following 426-residue polypeptide: Glutamyl-tRNA reductase (426 aa).

Residues 52-55, Ser-110, 115-117, and Gln-121 contribute to the substrate site; these read TCNR and EYE. The active-site Nucleophile is Cys-53. NADP(+) is bound at residue 190-195; the sequence is GAGEMG.

Belongs to the glutamyl-tRNA reductase family. Homodimer.

The catalysed reaction is (S)-4-amino-5-oxopentanoate + tRNA(Glu) + NADP(+) = L-glutamyl-tRNA(Glu) + NADPH + H(+). It functions in the pathway porphyrin-containing compound metabolism; protoporphyrin-IX biosynthesis; 5-aminolevulinate from L-glutamyl-tRNA(Glu): step 1/2. In terms of biological role, catalyzes the NADPH-dependent reduction of glutamyl-tRNA(Glu) to glutamate 1-semialdehyde (GSA). The chain is Glutamyl-tRNA reductase from Saccharolobus islandicus (strain Y.N.15.51 / Yellowstone #2) (Sulfolobus islandicus).